Reading from the N-terminus, the 1593-residue chain is MVKINFQIKKKKSNGPNFIGFDAVRVSVASPDQIKTWSYGEVKKPETINYRTFKPERDGLFCNRIFGPTKDWECHCGKYKYIKYKGTICDRCGVEVTESKVRRERFGHINLAVPVAHLWFLKKPPSRVGILLNMKISDLEKVIYYAKYIVMGDLKDRSGISFFARKGMLMGGEDFNLFKYGINNPIVKEEFKNIFDGIVCEEIKLDSNLTKALKQLKVLVKGQADSAGISTEEAAKKILENVKKGDIYYKVYFKPHSVYYYIDLDPSSHGEIKKILSEKFEKSSTVSITETDKKIRIEFFDIEKDKIYNDLRKDSFALKKYEGCLRIEILKNKIPFIENFSRSDSFVLLEESDINNIQNGFGDSLKVNIGAEAVRSLLEEINLDDEMKNIYAEIKKTKSDAERARLLRKLRVVEGFLNSQTRPEWMILTVLPVIPPDLRPLVALDGGRFATSDLNDLYRRIINRNNRLRHIEQLKAPIVMINNEKRLLQEAVDALIDNDSRMRPVTGAGNRILKSLSDTLKGKRGRFRQNLLGKRVDYSGRSVIVVGPNLRLNQCGIPKEMALELFKPFIVKELIKQENITLRSAKRMLERGDLKVWNILEKVTQSHPVLLNRAPTLHRLGIQAFEPVLVEGKSIQLHPLTCSAFNADFDGDQMAVHLPISLEAQLEARVLMMATRNILSPASGRPIAVPSQDMVLGNCYLTKEKYGVVGEGKVFSSVSEAISAYQAEKVDLQARIKVAGITSIRDKNLNNDDEQPDVTKWKNCKSEDDTEIINYTTVGRIIFNEQLPKNDDGSYALEYQNKSMTKKELVALVDRCYKELGQFKTTVLLDEIKRIGYKYATLAGISISIDEMKVPTEKEKMVREAKTKISEIEKQAKLGLITESERYNRIIDIWTRVTDEISDIMFDEMRKEETKAYKPGQNRFNSIFMMADSGSRGSRQQVRQLAGMRGLMAKPQKKLTGGIGEIIETPIISNFREGLTVLEYFISTHGGRKGLADTALKTAEAGYLTRRLVDVAHDVVVREEDCGTVNGVFIGTLRCGDEIIEKIDERVVGRTALDNVVDIVHDDLIIKRGELITPKKAEKLVEAGIDKIGIRSVLTCESGHGVCAKCYGVNPATGEQVEMGEAVGILAAQSIGEPGTQLTLRTFHIGGAASRVVQRSEVYAENNGTVNYYNLKTIQNKDGETIVLSRNAELVYTEYPVYRKQIYQIPYGAVIKIYDGQTVEIRVNPITGMKKDILIAKWDPHSKPIISEFDGTVNFVDVKDGVTLQREKSKITGQIERVIIEHSSDRRSPRIVVKKDDGSVVEYPLPVDTTLVVRDKDRVKSGDILAKIPQEISRTKDITGGLPRVAELFEGRRPRNVAVVSEIDGIVHLVGPTVKGNVKVEVENPETKMKKSYLVRAGRHLVVYEGDRVKEGEALSDGAINPHDILKVKGPKEVQEYLVNEIQQVYRLQGVSINDKHIEIIVRQMLSNVRITDSGDSHYLNGEIVSRYKYEIDRKAIKGKKGKAPIAHSILLGITKASLSSDSFISAASFQETTRILTEAAVSGQVDYLKGLKENVSIGRLIPAGTGLAAVDIDDNNKFYSREQNDAND.

Zn(2+)-binding residues include Cys74, Cys76, Cys89, and Cys92. Positions 648, 650, and 652 each coordinate Mg(2+). Zn(2+)-binding residues include Cys1026, Cys1100, Cys1107, and Cys1110.

Belongs to the RNA polymerase beta' chain family. The RNAP catalytic core consists of 2 alpha, 1 beta, 1 beta' and 1 omega subunit. When a sigma factor is associated with the core the holoenzyme is formed, which can initiate transcription. The cofactor is Mg(2+). Zn(2+) serves as cofactor.

The catalysed reaction is RNA(n) + a ribonucleoside 5'-triphosphate = RNA(n+1) + diphosphate. Its function is as follows. DNA-dependent RNA polymerase catalyzes the transcription of DNA into RNA using the four ribonucleoside triphosphates as substrates. This is DNA-directed RNA polymerase subunit beta' from Endomicrobium trichonymphae.